Reading from the N-terminus, the 265-residue chain is Putative cysteine-rich receptor-like protein kinase 9 (265 aa).

Positions 1-23 are cleaved as a signal peptide; it reads MSSLISFIFLFLFSFLTSFKASA. Gnk2-homologous domains are found at residues 27 to 131 and 142 to 244; these read FYLN…DKNI and FILS…LYSF. N-linked (GlcNAc...) asparagine glycosylation is found at Asn-35, Asn-60, Asn-69, Asn-153, Asn-177, and Asn-246.

The protein belongs to the protein kinase superfamily. Ser/Thr protein kinase family. CRK subfamily.

The protein resides in the secreted. The polypeptide is Putative cysteine-rich receptor-like protein kinase 9 (CRK9) (Arabidopsis thaliana (Mouse-ear cress)).